Consider the following 186-residue polypeptide: ADP-ribosylation factor-like protein 8A (186 aa).

An intramembrane region (note=Mediates targeting to membranes) is located at residues 1–19 (MIALFNKLLDWFKALFWKE). GTP-binding positions include 29–35 (QYSGKTT), 71–75 (DIGGQ), and 130–133 (NKRD).

It belongs to the small GTPase superfamily. Arf family. As to quaternary structure, interacts with PLEKHM1. When GTP-bound, interacts with RUFY3 and RUFY4, but not with RUFY1, nor RUFY2.

It localises to the late endosome membrane. Its subcellular location is the lysosome membrane. It is found in the cytoplasm. The protein resides in the cytoskeleton. The protein localises to the spindle. It localises to the cell projection. Its subcellular location is the axon. It is found in the synapse. Plays a role in lysosomes motility. In neurons, mediates the anterograde axonal long-range transport of presynaptic lysosome-related vesicles required for presynaptic biogenesis and synaptic function. May play a role in chromosome segregation. This is ADP-ribosylation factor-like protein 8A (Arl8a) from Mus musculus (Mouse).